The primary structure comprises 286 residues: B3 domain-containing protein REM11 (286 aa).

The TF-B3 1 DNA-binding region spans 1–70 (MAWNLAIITL…TPMLSLVSTQ (70 aa)). The segment at 68-114 (STQSTSHKSQKRECSKHSEKESISAVPSKGKKNRKARSNREERRDSS) is disordered. The span at 78-89 (KRECSKHSEKES) shows a compositional bias: basic and acidic residues. The segment at residues 119–219 (NRFVTFTPED…RAQVCFYGVF (101 aa)) is a DNA-binding region (TF-B3 2).

It localises to the nucleus. The chain is B3 domain-containing protein REM11 (REM11) from Arabidopsis thaliana (Mouse-ear cress).